The primary structure comprises 117 residues: Large-conductance mechanosensitive channel (117 aa).

A run of 3 helical transmembrane segments spans residues 7–27 (EFALKGNVLDLAVAVVMGAAF), 30–50 (IVTALVSYIIMPLIGLIFGTV), and 64–84 (GMFVQSIIDFIIIAFALFIFV).

Belongs to the MscL family. In terms of assembly, homopentamer.

It localises to the cell membrane. Functionally, channel that opens in response to stretch forces in the membrane lipid bilayer. May participate in the regulation of osmotic pressure changes within the cell. This chain is Large-conductance mechanosensitive channel, found in Staphylococcus saprophyticus subsp. saprophyticus (strain ATCC 15305 / DSM 20229 / NCIMB 8711 / NCTC 7292 / S-41).